The sequence spans 1385 residues: Serine-aspartate repeat-containing protein D (1385 aa).

An N-terminal signal peptide occupies residues 1 to 35 (MLNRENKTAITRKGMVSNRLNKFSIRKYTVGTASI). The short motif at 23–34 (FSIRKYTVGTAS) is the YSIRK-G/S signaling motif element. Positions 36 to 568 (LVGTTLIFGL…NNQSGGAGQE (533 aa)) are ligand binding A region. 2 disordered regions span residues 54–162 (ESTN…DLLE) and 200–224 (ETLV…KSTA). Composition is skewed to polar residues over residues 62–71 (EATTSASDNQ) and 94–109 (EMVS…NGNK). Basic and acidic residues predominate over residues 130 to 145 (KSDEQASPKSTNEDLN). Positions 146–155 (TKQTISNQEG) are enriched in polar residues. Over residues 205–214 (NNSNSNNENN) the composition is skewed to low complexity. 5 consecutive CNA-B domains span residues 569–680 (VYKI…IYKP), 681–791 (KYNL…YKTP), 792–901 (KYNL…FYKP), 902–1012 (TYNL…YKTP), and 1013–1123 (KYSL…EEET). Disordered regions lie at residues 856-886 (FETP…TGVI), 972-992 (YTPT…GLTT), and 1077-1361 (FEKP…SNNA). Polar residues-rich tracts occupy residues 860-869 (SGYTPTQVGS) and 972-981 (YTPTSVTSGN). The span at 1081-1090 (TGLTQTGTNT) shows a compositional bias: low complexity. 2 stretches are compositionally biased toward acidic residues: residues 1091–1101 (TEDDKDADGGE) and 1118–1324 (YYEE…DSDS). Residues 1348–1352 (LPETG) carry the LPXTG sorting signal motif. Threonine 1351 carries the pentaglycyl murein peptidoglycan amidated threonine modification. A propeptide spans 1352–1385 (GNENSGSNNATLFGGLFAALGSLLLFGRRKKQNK) (removed by sortase).

Belongs to the serine-aspartate repeat-containing protein (SDr) family. In terms of assembly, interacts with host DSG1; this interaction increases S.aureus adherence to keratinocytes.

It localises to the secreted. Its subcellular location is the cell wall. Functionally, cell surface-associated calcium-binding protein which plays an important role in adhesion and pathogenesis. Mediates interactions with components of the extracellular matrix such as host DSG1 to promote bacterial adhesion to host cells. Contributes to the resistance to killing by innate immune components such as neutrophils present in blood and thus attenuates bacterial clearance. This chain is Serine-aspartate repeat-containing protein D (sdrD), found in Staphylococcus aureus (strain Mu50 / ATCC 700699).